Reading from the N-terminus, the 129-residue chain is Putative protein p14 (129 aa).

This chain is Putative protein p14 (14), found in Acyrthosiphon pisum secondary endosymbiont phage 1 (Bacteriophage APSE-1).